The sequence spans 804 residues: Pentatricopeptide repeat-containing protein At4g35130, chloroplastic (804 aa).

Residues 1–19 (MAATLLSQCYRIYNSDACK) constitute a chloroplast transit peptide. 16 PPR repeats span residues 63–93 (NDPALTRALRGFADSRLMEDALQLFDEMNKA), 94–128 (DAFLWNVMIKGFTSCGLYIEAVQFYSRMVFAGVKA), 129–163 (DTFTYPFVIKSVAGISSLEEGKKIHAMVIKLGFVS), 164–194 (DVYVCNSLISLYMKLGCAWDAEKVFEEMPER), 195–229 (DIVSWNSMISGYLALGDGFSSLMLFKEMLKCGFKP), 230–264 (DRFSTMSALGACSHVYSPKMGKEIHCHAVRSRIET), 266–296 (DVMVMTSILDMYSKYGEVSYAERIFNGMIQR), 297–332 (NIVAWNVMIGCYARNGRVTDAFLCFQKMSEQNGLQP), 333–363 (DVITSINLLPASAILEGRTIHGYAMRRGFLP), 364–394 (HMVLETALIDMYGECGQLKSAEVIFDRMAEK), 395–429 (NVISWNSIIAAYVQNGKNYSALELFQELWDSSLVP), 430–464 (DSTTIASILPAYAESLSLSEGREIHAYIVKSRYWS), 465–495 (NTIILNSLVHMYAMCGDLEDARKCFNHILLK), 496–530 (DVVSWNSIIMAYAVHGFGRISVWLFSEMIASRVNP), 531–561 (NKSTFASLLAACSISGMVDEGWEYFESMKRE), and 567–597 (GIEHYGCMLDLIGRTGNFSAAKRFLEEMPFV). The type E motif stretch occupies residues 602–677 (IWGSLLNASR…TSSRSTVEAK (76 aa)). Positions 678–708 (GKSHVFTNGDRSHVATNKIYEVLDVVSRMVG) are type E(+) motif. Residues 710-804 (EDIYVHCVSR…NGRCSCGNYW (95 aa)) are type DYW motif.

This sequence belongs to the PPR family. PCMP-H subfamily.

The protein localises to the plastid. It is found in the chloroplast. This chain is Pentatricopeptide repeat-containing protein At4g35130, chloroplastic (PCMP-H27), found in Arabidopsis thaliana (Mouse-ear cress).